The primary structure comprises 663 residues: Transforming growth factor beta activator LRRC32 (663 aa).

An N-terminal signal peptide occupies residues 1–17 (MSHQILLLLAMLTLGLA). At 18 to 628 (ISQRREQVPC…CEKGGLKNVN (611 aa)) the chain is on the extracellular side. Residues 22–49 (REQVPCRTVNKEALCHGLGLLQVPSVLS) enclose the LRRNT domain. 10 LRR repeats span residues 49–72 (SLDIQALYLSGNQLQSILVSPLGF), 73–96 (YTALRHLDLSDNQISFLQAGVFQA), 98–123 (PYLEHLNLAHNRLATGMALNSGGLGR), 125–148 (PLLVSLDLSGNSLHGNLVERLLGE), 149–172 (TPRLRTLSLAENSLTRLARHTFWG), 174–196 (PAVEQLDLHSNVLMDIEDGAFEA), 197–220 (LPHLTHLNLSRNSLTCISDFSLQQ), 222–241 (QVLDLSCNSIEAFQTAPEPQ), 243–267 (QFQLAWLDLRENKLLHFPDLAVFPR), and 269–287 (IYLNVSNNLIQLPAGLPRG). Asparagine 204 carries N-linked (GlcNAc...) asparagine glycosylation. Residues asparagine 272, asparagine 305, and asparagine 309 are each glycosylated (N-linked (GlcNAc...) asparagine). The interval 291–311 (LHAPSEGWSASPLSNPSRNAS) is disordered. Residues 301–311 (SPLSNPSRNAS) show a composition bias toward polar residues. LRR repeat units lie at residues 315-338 (LSQLLNLDLSYNEIELVPASFLEH), 340-362 (TSLRFLNLSRNCLRSFEARQVDS), 363-386 (LPCLVLLDLSHNVLEALELGTKVL), 387-409 (GSLQTLLLQDNALQELPPYTFAS), 411-433 (ASLQRLNLQGNQVSPCGGPAEPG), 443-466 (IPTLHVLNMAGNSMGMLRAGSFLH), 468-489 (PLTELDLSTNPGLDVATGALVG), 491-514 (EASLEVLELQGNGLTVLRVDLPCF), 515-539 (LRLKRLNLAENQLSHLPAWTRAVSL), 541-559 (VLDLRNNSFSLLPGNAMGG), and 561-584 (ETSLRRLYLQGNPLSCCGNGWLAA). The N-linked (GlcNAc...) asparagine glycan is linked to asparagine 346. N-linked (GlcNAc...) asparagine glycosylation occurs at asparagine 546. Positions 572 to 621 (NPLSCCGNGWLAAQLHQGRVDVDATQDLICRFGSQEELSLSLVRPEDCEK) constitute an LRRCT domain. The chain crosses the membrane as a helical span at residues 629–649 (LILLLSFTLVSAIVLTTLATI). The Cytoplasmic portion of the chain corresponds to 650-663 (CFLRRQKLSQQYKA).

Belongs to the LRRC32/LRRC33 family. Interacts with TGFB1; associates via disulfide bonds with the Latency-associated peptide chain (LAP) regulatory chain of TGFB1, leading to regulate activation of TGF-beta-1. Interacts with TGFB2. Interacts with TGFB3; associates via disulfide bonds with the Latency-associated peptide chain (LAP) regulatory chain of TGFB3, leading to regulate activation of TGF-beta-3. Interacts with LAPTM4B; decreases TGFB1 production in regulatory T-cells. As to expression, present in medial edge epithelial cells at 14.5 dpc (at protein level).

It is found in the cell membrane. It localises to the cell surface. Its function is as follows. Key regulator of transforming growth factor beta (TGFB1, TGFB2 and TGFB3) that controls TGF-beta activation by maintaining it in a latent state during storage in extracellular space. Associates specifically via disulfide bonds with the Latency-associated peptide (LAP), which is the regulatory chain of TGF-beta, and regulates integrin-dependent activation of TGF-beta. Able to outcompete LTBP1 for binding to LAP regulatory chain of TGF-beta. Controls activation of TGF-beta-1 (TGFB1) on the surface of activated regulatory T-cells (Tregs). Required for epithelial fusion during palate development by regulating activation of TGF-beta-3 (TGFB3). This is Transforming growth factor beta activator LRRC32 from Mus musculus (Mouse).